Here is an 833-residue protein sequence, read N- to C-terminus: Leucine--tRNA ligase (833 aa).

The 'HIGH' region signature appears at Pro-41 to His-52. Residues Lys-610 to Ser-614 carry the 'KMSKS' region motif. Residue Lys-613 coordinates ATP.

Belongs to the class-I aminoacyl-tRNA synthetase family.

The protein localises to the cytoplasm. The catalysed reaction is tRNA(Leu) + L-leucine + ATP = L-leucyl-tRNA(Leu) + AMP + diphosphate. In Streptococcus pneumoniae serotype 19F (strain G54), this protein is Leucine--tRNA ligase.